Here is a 72-residue protein sequence, read N- to C-terminus: Translation initiation factor IF-1 (72 aa).

Positions 1 to 72 constitute an S1-like domain; the sequence is MAKEDNIEMQ…SKGRIVFRAR (72 aa).

It belongs to the IF-1 family. In terms of assembly, component of the 30S ribosomal translation pre-initiation complex which assembles on the 30S ribosome in the order IF-2 and IF-3, IF-1 and N-formylmethionyl-tRNA(fMet); mRNA recruitment can occur at any time during PIC assembly.

Its subcellular location is the cytoplasm. Its function is as follows. One of the essential components for the initiation of protein synthesis. Stabilizes the binding of IF-2 and IF-3 on the 30S subunit to which N-formylmethionyl-tRNA(fMet) subsequently binds. Helps modulate mRNA selection, yielding the 30S pre-initiation complex (PIC). Upon addition of the 50S ribosomal subunit IF-1, IF-2 and IF-3 are released leaving the mature 70S translation initiation complex. The polypeptide is Translation initiation factor IF-1 (Shewanella frigidimarina (strain NCIMB 400)).